The following is a 149-amino-acid chain: Deoxyuridine 5'-triphosphate nucleotidohydrolase (149 aa).

Residues 68 to 70 (RSG), N81, 85 to 87 (LID), and M95 contribute to the substrate site.

It belongs to the dUTPase family. The cofactor is Mg(2+).

The enzyme catalyses dUTP + H2O = dUMP + diphosphate + H(+). The protein operates within pyrimidine metabolism; dUMP biosynthesis; dUMP from dCTP (dUTP route): step 2/2. In terms of biological role, this enzyme is involved in nucleotide metabolism: it produces dUMP, the immediate precursor of thymidine nucleotides and it decreases the intracellular concentration of dUTP so that uracil cannot be incorporated into DNA. The polypeptide is Deoxyuridine 5'-triphosphate nucleotidohydrolase (Janthinobacterium sp. (strain Marseille) (Minibacterium massiliensis)).